A 273-amino-acid chain; its full sequence is Phosphate import ATP-binding protein PstB (273 aa).

One can recognise an ABC transporter domain in the interval 18 to 257 (ISLQNVTISY…EFDKTKKIFN (240 aa)). 50 to 57 (GPSGCGKS) serves as a coordination point for ATP.

Belongs to the ABC transporter superfamily. Phosphate importer (TC 3.A.1.7) family. As to quaternary structure, the complex is composed of two ATP-binding proteins (PstB), two transmembrane proteins (PstC and PstA) and a solute-binding protein (PstS).

It localises to the cell inner membrane. It carries out the reaction phosphate(out) + ATP + H2O = ADP + 2 phosphate(in) + H(+). Its function is as follows. Part of the ABC transporter complex PstSACB involved in phosphate import. Responsible for energy coupling to the transport system. The sequence is that of Phosphate import ATP-binding protein PstB from Prochlorococcus marinus (strain SARG / CCMP1375 / SS120).